The chain runs to 370 residues: tRNA-specific 2-thiouridylase MnmA (370 aa).

Residues 9–16 (GLSGGVDS) and Met-35 contribute to the ATP site. An interaction with target base in tRNA region spans residues 95–97 (NPD). Cys-100 serves as the catalytic Nucleophile. Cys-100 and Cys-198 are disulfide-bonded. Gly-124 lines the ATP pocket. Residues 148–150 (KDQ) are interaction with tRNA. Cys-198 acts as the Cysteine persulfide intermediate in catalysis. The segment at 316 to 317 (RY) is interaction with tRNA.

It belongs to the MnmA/TRMU family.

The protein resides in the cytoplasm. The enzyme catalyses S-sulfanyl-L-cysteinyl-[protein] + uridine(34) in tRNA + AH2 + ATP = 2-thiouridine(34) in tRNA + L-cysteinyl-[protein] + A + AMP + diphosphate + H(+). In terms of biological role, catalyzes the 2-thiolation of uridine at the wobble position (U34) of tRNA, leading to the formation of s(2)U34. This chain is tRNA-specific 2-thiouridylase MnmA, found in Acidovorax ebreus (strain TPSY) (Diaphorobacter sp. (strain TPSY)).